The sequence spans 312 residues: tRNA dimethylallyltransferase (312 aa).

15–22 is a binding site for ATP; that stretch reads GPTAAGKS. A substrate-binding site is contributed by 17–22; the sequence is TAAGKS. The segment at 40–43 is interaction with substrate tRNA; sequence DSMQ.

It belongs to the IPP transferase family. Monomer. Requires Mg(2+) as cofactor.

It carries out the reaction adenosine(37) in tRNA + dimethylallyl diphosphate = N(6)-dimethylallyladenosine(37) in tRNA + diphosphate. Catalyzes the transfer of a dimethylallyl group onto the adenine at position 37 in tRNAs that read codons beginning with uridine, leading to the formation of N6-(dimethylallyl)adenosine (i(6)A). This is tRNA dimethylallyltransferase from Streptomyces griseus subsp. griseus (strain JCM 4626 / CBS 651.72 / NBRC 13350 / KCC S-0626 / ISP 5235).